Reading from the N-terminus, the 61-residue chain is Cytotoxin homolog 2 (61 aa).

Cystine bridges form between Cys3–Cys22, Cys15–Cys39, Cys43–Cys54, and Cys55–Cys60.

This sequence belongs to the three-finger toxin family. Short-chain subfamily. Orphan group XV sub-subfamily. As to expression, expressed by the venom gland.

It localises to the secreted. The protein resides in the target cell membrane. In terms of biological role, has low cytotoxic activity. The sequence is that of Cytotoxin homolog 2 from Naja melanoleuca (Forest cobra).